The chain runs to 1044 residues: GRB10-interacting GYF protein 1 (1044 aa).

Residues S24, S28, S137, and S157 each carry the phosphoserine modification. Disordered stretches follow at residues 104-290 (GKGA…DGLP) and 306-424 (ASGA…LEDE). 2 stretches are compositionally biased toward basic and acidic residues: residues 148–179 (NPRE…RSGF) and 186–203 (PRKE…SLRE). S228 is modified (phosphoserine). 2 stretches are compositionally biased toward basic and acidic residues: residues 237–265 (GWRE…EDGR) and 316–332 (GPKE…FRGL). Over residues 333–350 (EEEEEEEEEPSEGVDEER) the composition is skewed to acidic residues. S343 is subject to Phosphoserine. A compositionally biased stretch (low complexity) spans 366–379 (NSSSPSSLPALGPL). Positions 389 to 403 (AVEKELPPAEGDELR) are enriched in basic and acidic residues. S408 carries the phosphoserine modification. The region spanning 476–524 (ARKWFYKDPQGEIQGPFTTQEMAEWFQAGYFSMSLLVKRGCDEGFQPLG) is the GYF domain. Residues S540 and S634 each carry the phosphoserine modification. Positions 692–706 (KREEEERKRREEKRR) are enriched in basic and acidic residues. Disordered stretches follow at residues 692–721 (KREE…RQEE), 820–842 (EAGP…LGLW), 855–883 (SLGL…RKKT), 966–987 (QKAS…QEAW), 1000–1019 (NHST…RALM), and 1024–1044 (PSIL…VDDY). Residues 829–839 (DKSGGSSGGNL) show a composition bias toward gly residues. Low complexity-rich tracts occupy residues 855 to 877 (SLGL…LSGR) and 970 to 984 (QQRQ…QQQQ). Position 863 is a phosphoserine (S863).

Belongs to the GIGYF family. As to quaternary structure, interacts with GRB10. This transient binding is increased under IGF1 stimulation and leads to recruitment of GIGYF1/GRB10 complex to IGF1 receptor. Interacts with DDX6. Ubiquitous. Lower expression in skeletal muscle, liver and testis.

Its function is as follows. May act cooperatively with GRB10 to regulate tyrosine kinase receptor signaling. May increase IGF1 receptor phosphorylation under IGF1 stimulation as well as phosphorylation of IRS1 and SHC1. The protein is GRB10-interacting GYF protein 1 (Gigyf1) of Mus musculus (Mouse).